The following is a 205-amino-acid chain: Urease accessory protein UreG (205 aa).

GTP is bound at residue 14–21; that stretch reads GPVGSGKT.

This sequence belongs to the SIMIBI class G3E GTPase family. UreG subfamily. Homodimer. UreD, UreF and UreG form a complex that acts as a GTP-hydrolysis-dependent molecular chaperone, activating the urease apoprotein by helping to assemble the nickel containing metallocenter of UreC. The UreE protein probably delivers the nickel.

Its subcellular location is the cytoplasm. In terms of biological role, facilitates the functional incorporation of the urease nickel metallocenter. This process requires GTP hydrolysis, probably effectuated by UreG. This is Urease accessory protein UreG from Escherichia coli O157:H7.